A 121-amino-acid chain; its full sequence is NADH-quinone oxidoreductase subunit 7 (121 aa).

3 consecutive transmembrane segments (helical) span residues Ile-11–Val-31, Leu-65–Val-85, and Val-93–Trp-113.

This sequence belongs to the complex I subunit 3 family. As to quaternary structure, NDH-1 is composed of at least 14 different subunits, Nqo1 to Nqo14. The complex has a L-shaped structure, with the hydrophobic arm (subunits Nqo7, Nqo8, Nqo10 to Nqo14) embedded in the inner membrane and the hydrophilic peripheral arm (subunits Nqo1 to Nqo6, Nqo9) protruding into the bacterial cytoplasm. The hydrophilic domain contains all the redox centers.

The protein localises to the cell inner membrane. The enzyme catalyses a quinone + NADH + 5 H(+)(in) = a quinol + NAD(+) + 4 H(+)(out). NDH-1 shuttles electrons from NADH, via FMN and iron-sulfur (Fe-S) centers, to quinones in the respiratory chain. The immediate electron acceptor for the enzyme in this species is believed to be ubiquinone. Couples the redox reaction to proton translocation (for every two electrons transferred, four hydrogen ions are translocated across the cytoplasmic membrane), and thus conserves the redox energy in a proton gradient. The polypeptide is NADH-quinone oxidoreductase subunit 7 (nqo7) (Paracoccus denitrificans).